The primary structure comprises 190 residues: ADP-ribosylation factor-like protein 6 (190 aa).

Gly2 is lipidated: N-myristoyl glycine. Residues 24–31 (GLDNSGKT), 69–73 (DMAGQ), and 130–133 (NKMD) each bind GTP.

Belongs to the small GTPase superfamily. Arf family. As to expression, specifically expressed in ciliated cells.

The protein localises to the cytoplasm. The polypeptide is ADP-ribosylation factor-like protein 6 (Caenorhabditis elegans).